Reading from the N-terminus, the 623-residue chain is Regulatory solute carrier protein family 1 member 1 (623 aa).

Polar residues-rich tracts occupy residues 1–16, 83–99, and 133–144; these read MSSLPTSDGFNHQAHP, CASSADNAPANQTPAIP, and EASLSVTTTRMQ. Disordered stretches follow at residues 1-48, 71-99, 116-189, and 433-493; these read MSSL…PDSI, RKEQLPLQDPSDCASSADNAPANQTPAIP, SAEG…APHD, and EELT…PHCT. Composition is skewed to basic and acidic residues over residues 150-159, 170-180, and 460-473; these read IGEKGWHPEY, QHEEPRNEQHE, and LVDKENVPRSRESV. Polar residues predominate over residues 474 to 491; the sequence is NESSLVTLDSAKTSNQPH. The 41-residue stretch at 577-617 folds into the UBA domain; the sequence is IFPAADIDRILRAGFTLQEALGALHRVGGNADLALLVLLAK.

As to quaternary structure, interacts with YRDC. In terms of tissue distribution, renal outer cortex and outer medulla, small intestine and liver.

It localises to the cell membrane. The protein localises to the nucleus. Its subcellular location is the golgi apparatus. The protein resides in the trans-Golgi network. In terms of biological role, mediates transcriptional and post-transcriptional regulation of SLC5A1. Inhibits a dynamin and PKC-dependent exocytotic pathway of SLC5A1. Also involved in transcriptional regulation of SLC22A2. Exhibits glucose-dependent, short-term inhibition of SLC5A1 and SLC22A2 by inhibiting the release of vesicles from the trans-Golgi network. This Sus scrofa (Pig) protein is Regulatory solute carrier protein family 1 member 1 (RSC1A1).